The chain runs to 220 residues: UPF0319 protein CKO_02102 (220 aa).

The first 20 residues, 1 to 20, serve as a signal peptide directing secretion; sequence MKTGIITMLFVLYLPVTAFA.

Belongs to the UPF0319 family.

This is UPF0319 protein CKO_02102 from Citrobacter koseri (strain ATCC BAA-895 / CDC 4225-83 / SGSC4696).